Here is a 295-residue protein sequence, read N- to C-terminus: Glycine--tRNA ligase alpha subunit (295 aa).

The protein belongs to the class-II aminoacyl-tRNA synthetase family. As to quaternary structure, tetramer of two alpha and two beta subunits.

The protein resides in the cytoplasm. The enzyme catalyses tRNA(Gly) + glycine + ATP = glycyl-tRNA(Gly) + AMP + diphosphate. This chain is Glycine--tRNA ligase alpha subunit, found in Prochlorococcus marinus (strain MIT 9215).